We begin with the raw amino-acid sequence, 295 residues long: Glutamyl-Q tRNA(Asp) synthetase (295 aa).

L-glutamate contacts are provided by residues 9–13 (RFAPT) and E45. A 'HIGH' region motif is present at residues 12 to 22 (PTPSGYLHFGS). C101, C103, Y115, and C119 together coordinate Zn(2+). Residues Y172 and R190 each coordinate L-glutamate. The 'KMSKS' region motif lies at 228 to 232 (KLGKS). Residue K231 coordinates ATP.

Belongs to the class-I aminoacyl-tRNA synthetase family. GluQ subfamily. Zn(2+) serves as cofactor.

Catalyzes the tRNA-independent activation of glutamate in presence of ATP and the subsequent transfer of glutamate onto a tRNA(Asp). Glutamate is transferred on the 2-amino-5-(4,5-dihydroxy-2-cyclopenten-1-yl) moiety of the queuosine in the wobble position of the QUC anticodon. In Pseudomonas syringae pv. tomato (strain ATCC BAA-871 / DC3000), this protein is Glutamyl-Q tRNA(Asp) synthetase.